A 117-amino-acid polypeptide reads, in one-letter code: Large ribosomal subunit protein uL18 (117 aa).

Belongs to the universal ribosomal protein uL18 family. Part of the 50S ribosomal subunit; part of the 5S rRNA/L5/L18/L25 subcomplex. Contacts the 5S and 23S rRNAs.

This is one of the proteins that bind and probably mediate the attachment of the 5S RNA into the large ribosomal subunit, where it forms part of the central protuberance. The sequence is that of Large ribosomal subunit protein uL18 from Haemophilus influenzae (strain 86-028NP).